We begin with the raw amino-acid sequence, 337 residues long: Peroxisome biogenesis factor 10 (337 aa).

Residues 1 to 24 (MKNDNKLQKEALMRLSQLRFPFAD) lie on the Peroxisomal matrix side of the membrane. A helical transmembrane segment spans residues 25–54 (APSIVQAHQKDEQIQGLLIMKVTELCKLIK). Position 55 (serine 55) is a topological domain, cytoplasmic. The chain crosses the membrane as a helical span at residues 56–77 (QLFVNSYPKELSIFAKLLYLLF). The Peroxisomal matrix portion of the chain corresponds to 78–105 (TTGRRGRTLGEEYVDLTYTNRKGTRLAG). Residues 106–138 (RLKMIVFAFAYPLCPYFITKLYKKIMKNNKESK) form a helical membrane-spanning segment. Topologically, residues 139–145 (IEDTESV) are cytoplasmic. A helical transmembrane segment spans residues 146–166 (AAFCKGLLDFILDVHMTLFYF). Residues 167–202 (KGAFYSISKRIFGMRYVFKHILSKNEANFREEGSQK) lie on the Peroxisomal matrix side of the membrane. A helical membrane pass occupies residues 203-222 (YKVLGYILLAQNVMKWYPVL). Residues 223-337 (TSTLGSWIYG…QPQEILVLRQ (115 aa)) lie on the Cytoplasmic side of the membrane. The Zn(2+) site is built by cysteine 286, cysteine 289, cysteine 301, histidine 303, cysteine 306, cysteine 309, cysteine 320, and cysteine 323. An RING-type zinc finger spans residues 286-327 (CILCLMNMSDPSCAPCGHLFCWSCLMSWCKERPECPLCRQHC).

This sequence belongs to the pex2/pex10/pex12 family. In terms of assembly, component of the PEX2-PEX10-PEX12 retrotranslocation channel, composed of PEX2, PEX10 and PEX12.

The protein localises to the peroxisome membrane. It catalyses the reaction S-ubiquitinyl-[E2 ubiquitin-conjugating enzyme]-L-cysteine + [acceptor protein]-L-lysine = [E2 ubiquitin-conjugating enzyme]-L-cysteine + N(6)-ubiquitinyl-[acceptor protein]-L-lysine.. Its pathway is protein modification; protein ubiquitination. Its activity is regulated as follows. The E3 ubiquitin-protein ligase activity is stimulated by PEX12. Its function is as follows. E3 ubiquitin-protein ligase component of a retrotranslocation channel required for peroxisome organization by mediating export of the PEX5 receptor from peroxisomes to the cytosol, thereby promoting PEX5 recycling. The retrotranslocation channel is composed of PEX2, PEX10 and PEX12; each subunit contributing transmembrane segments that coassemble into an open channel that specifically allows the passage of PEX5 through the peroxisomal membrane. PEX10 also regulates PEX5 recycling by acting as a E3 ubiquitin-protein ligase. When PEX5 recycling is compromised, PEX10 catalyzes polyubiquitination of PEX5 during its passage through the retrotranslocation channel, leading to its degradation. This Saccharomyces cerevisiae (strain ATCC 204508 / S288c) (Baker's yeast) protein is Peroxisome biogenesis factor 10.